Consider the following 83-residue polypeptide: Sulfur carrier protein TusA (83 aa).

Residue Cys-20 is the Cysteine persulfide intermediate of the active site.

It belongs to the sulfur carrier protein TusA family.

It localises to the cytoplasm. Its function is as follows. Sulfur carrier protein which probably makes part of a sulfur-relay system. This chain is Sulfur carrier protein TusA, found in Pseudoalteromonas atlantica (strain T6c / ATCC BAA-1087).